Here is a 447-residue protein sequence, read N- to C-terminus: Argininosuccinate synthase (447 aa).

ATP contacts are provided by residues 17-25 (AFSGGLDTS) and alanine 43. An L-citrulline-binding site is contributed by tyrosine 99. ATP contacts are provided by glycine 129 and threonine 131. Threonine 131, asparagine 135, and aspartate 136 together coordinate L-aspartate. Residue asparagine 135 participates in L-citrulline binding. Aspartate 136 is a binding site for ATP. Positions 139 and 192 each coordinate L-citrulline. Aspartate 194 lines the ATP pocket. L-citrulline contacts are provided by threonine 201, glutamate 203, and glutamate 280.

Belongs to the argininosuccinate synthase family. Type 2 subfamily. In terms of assembly, homotetramer.

It localises to the cytoplasm. The enzyme catalyses L-citrulline + L-aspartate + ATP = 2-(N(omega)-L-arginino)succinate + AMP + diphosphate + H(+). Its pathway is amino-acid biosynthesis; L-arginine biosynthesis; L-arginine from L-ornithine and carbamoyl phosphate: step 2/3. In Salmonella schwarzengrund (strain CVM19633), this protein is Argininosuccinate synthase.